The chain runs to 131 residues: Small ribosomal subunit protein uS8 (131 aa).

Belongs to the universal ribosomal protein uS8 family. In terms of assembly, part of the 30S ribosomal subunit. Contacts proteins S5 and S12.

Its function is as follows. One of the primary rRNA binding proteins, it binds directly to 16S rRNA central domain where it helps coordinate assembly of the platform of the 30S subunit. In Bordetella parapertussis (strain 12822 / ATCC BAA-587 / NCTC 13253), this protein is Small ribosomal subunit protein uS8.